Consider the following 319-residue polypeptide: ATP-dependent 6-phosphofructokinase (319 aa).

Glycine 11 lines the ATP pocket. 21-25 (RAVAR) contributes to the ADP binding site. ATP is bound by residues 72 to 73 (RY) and 102 to 105 (GDGS). Residue aspartate 103 coordinates Mg(2+). Position 125–127 (125–127 (TID)) interacts with substrate. Residue aspartate 127 is the Proton acceptor of the active site. Arginine 154 is an ADP binding site. Substrate-binding positions include arginine 162 and 169-171 (MGR). Residues 185–187 (GAE) and arginine 211 contribute to the ADP site. Substrate contacts are provided by residues glutamate 222, arginine 243, and 249–252 (HIVR).

It belongs to the phosphofructokinase type A (PFKA) family. ATP-dependent PFK group I subfamily. Prokaryotic clade 'B1' sub-subfamily. Homotetramer. Mg(2+) is required as a cofactor.

It localises to the cytoplasm. It carries out the reaction beta-D-fructose 6-phosphate + ATP = beta-D-fructose 1,6-bisphosphate + ADP + H(+). The protein operates within carbohydrate degradation; glycolysis; D-glyceraldehyde 3-phosphate and glycerone phosphate from D-glucose: step 3/4. Its activity is regulated as follows. Allosterically activated by ADP and other diphosphonucleosides, and allosterically inhibited by phosphoenolpyruvate. Catalyzes the phosphorylation of D-fructose 6-phosphate to fructose 1,6-bisphosphate by ATP, the first committing step of glycolysis. The chain is ATP-dependent 6-phosphofructokinase from Lacticaseibacillus casei (strain BL23) (Lactobacillus casei).